A 544-amino-acid chain; its full sequence is Zinc finger and SCAN domain-containing protein 25 (544 aa).

Residues K3 and K22 each participate in a glycyl lysine isopeptide (Lys-Gly) (interchain with G-Cter in SUMO2) cross-link. Residues 42–124 form the SCAN box domain; that stretch reads RLRFRQFRYQ…AMVEDLTERA (83 aa). K128 is covalently cross-linked (Glycyl lysine isopeptide (Lys-Gly) (interchain with G-Cter in SUMO2)). Positions 157 to 189 are disordered; sequence VEVKPEWGMPPGEGVQGPDPGTEEQLSQDPGDE. Glycyl lysine isopeptide (Lys-Gly) (interchain with G-Cter in SUMO2) cross-links involve residues K278 and K285. C2H2-type zinc fingers lie at residues 348-370, 375-397, 403-425, 431-453, 459-480, and 486-508; these read FQCP…QRTH, YGCV…QRTH, YVCS…QRSH, YKCG…RRTH, YTCE…RRAH, and YGCQ…QRIH. Residues 514–536 form a C2H2-type 7; degenerate zinc finger; that stretch reads YHCPACGRSFNQRSILNRHQKTQ.

This sequence belongs to the krueppel C2H2-type zinc-finger protein family.

Its subcellular location is the nucleus. May be involved in transcriptional regulation. The protein is Zinc finger and SCAN domain-containing protein 25 (ZSCAN25) of Homo sapiens (Human).